Reading from the N-terminus, the 481-residue chain is Methylenetetrahydrofolate--tRNA-(uracil-5-)-methyltransferase TrmFO (481 aa).

13–18 (GGGLAG) provides a ligand contact to FAD.

Belongs to the MnmG family. TrmFO subfamily. It depends on FAD as a cofactor.

The protein localises to the cytoplasm. The enzyme catalyses uridine(54) in tRNA + (6R)-5,10-methylene-5,6,7,8-tetrahydrofolate + NADH + H(+) = 5-methyluridine(54) in tRNA + (6S)-5,6,7,8-tetrahydrofolate + NAD(+). It carries out the reaction uridine(54) in tRNA + (6R)-5,10-methylene-5,6,7,8-tetrahydrofolate + NADPH + H(+) = 5-methyluridine(54) in tRNA + (6S)-5,6,7,8-tetrahydrofolate + NADP(+). Catalyzes the folate-dependent formation of 5-methyl-uridine at position 54 (M-5-U54) in all tRNAs. This Agrobacterium fabrum (strain C58 / ATCC 33970) (Agrobacterium tumefaciens (strain C58)) protein is Methylenetetrahydrofolate--tRNA-(uracil-5-)-methyltransferase TrmFO.